A 130-amino-acid polypeptide reads, in one-letter code: ATP synthase epsilon chain (130 aa).

It belongs to the ATPase epsilon chain family. In terms of assembly, F-type ATPases have 2 components, CF(1) - the catalytic core - and CF(0) - the membrane proton channel. CF(1) has five subunits: alpha(3), beta(3), gamma(1), delta(1), epsilon(1). CF(0) has three main subunits: a, b and c.

The protein localises to the cell inner membrane. Its function is as follows. Produces ATP from ADP in the presence of a proton gradient across the membrane. In Pelagibacter ubique (strain HTCC1062), this protein is ATP synthase epsilon chain.